Reading from the N-terminus, the 500-residue chain is Type-2 serine--tRNA ligase (500 aa).

Residue Ala305 coordinates L-serine. Cys307 is a binding site for Zn(2+). Position 337 (Arg337) interacts with L-serine. Residues 337 to 339 (RYE) and 348 to 349 (RV) contribute to the ATP site. L-serine contacts are provided by residues 354–356 (RIE) and Gln401. Glu356 is a Zn(2+) binding site. ATP is bound at residue Glu430. Asn433 provides a ligand contact to L-serine. Residue Cys459 coordinates Zn(2+). Arg466 lines the ATP pocket.

The protein belongs to the class-II aminoacyl-tRNA synthetase family. Type-2 seryl-tRNA synthetase subfamily. Homodimer. Requires Zn(2+) as cofactor.

It is found in the cytoplasm. The enzyme catalyses tRNA(Ser) + L-serine + ATP = L-seryl-tRNA(Ser) + AMP + diphosphate + H(+). It catalyses the reaction tRNA(Sec) + L-serine + ATP = L-seryl-tRNA(Sec) + AMP + diphosphate + H(+). The protein operates within aminoacyl-tRNA biosynthesis; selenocysteinyl-tRNA(Sec) biosynthesis; L-seryl-tRNA(Sec) from L-serine and tRNA(Sec): step 1/1. In terms of biological role, catalyzes the attachment of serine to tRNA(Ser). Is also able to aminoacylate tRNA(Sec) with serine, to form the misacylated tRNA L-seryl-tRNA(Sec), which will be further converted into selenocysteinyl-tRNA(Sec). In Methanothrix thermoacetophila (strain DSM 6194 / JCM 14653 / NBRC 101360 / PT) (Methanosaeta thermophila), this protein is Type-2 serine--tRNA ligase.